The primary structure comprises 107 residues: UPF0102 protein Tlet_0667 (107 aa).

The protein belongs to the UPF0102 family.

The chain is UPF0102 protein Tlet_0667 from Pseudothermotoga lettingae (strain ATCC BAA-301 / DSM 14385 / NBRC 107922 / TMO) (Thermotoga lettingae).